We begin with the raw amino-acid sequence, 1040 residues long: Multidrug resistance protein MdtB (1040 aa).

Transmembrane regions (helical) follow at residues 25 to 45 (LLMAAILLAGIIGYRFLPVAA), 347 to 367 (LMLAIALVVMIIYLFLRNIPA), 369 to 389 (IIPGVAVPLSLIGTFAVMVFL), 396 to 416 (LTLMALTIATGFVVDDAIVVI), 440 to 460 (IGFTIISLTFSLIAVLIPLLF), 472 to 492 (FAVTLAVAILISAVVSLTLTP), 537 to 557 (WLTLSVAFATLLLSVMLWIVI), 863 to 883 (LGSTVWLIVAAVVAMYIVLGV), 888 to 908 (FIHPITILSTLPTAGVGALLA), 910 to 930 (IIAGSELDIIAIIGIILLIGI), 968 to 988 (ILMTTLAALLGALPLMLSTGV), and 998 to 1018 (IAMVGGLLVSQVLTLFTTPVI).

This sequence belongs to the resistance-nodulation-cell division (RND) (TC 2.A.6) family. MdtB subfamily. In terms of assembly, part of a tripartite efflux system composed of MdtA, MdtB and MdtC. MdtB forms a heteromultimer with MdtC.

The protein localises to the cell inner membrane. The polypeptide is Multidrug resistance protein MdtB (Salmonella choleraesuis (strain SC-B67)).